Reading from the N-terminus, the 412-residue chain is Phosphoglycerate kinase (412 aa).

Residues 24-26 (DLN), arginine 44, 67-70 (HLGR), arginine 126, and arginine 170 each bind substrate. ATP is bound by residues lysine 220, glycine 308, glutamate 339, and 368 to 371 (GGDS).

It belongs to the phosphoglycerate kinase family. As to quaternary structure, monomer.

Its subcellular location is the cytoplasm. It carries out the reaction (2R)-3-phosphoglycerate + ATP = (2R)-3-phospho-glyceroyl phosphate + ADP. It participates in carbohydrate degradation; glycolysis; pyruvate from D-glyceraldehyde 3-phosphate: step 2/5. The sequence is that of Phosphoglycerate kinase from Mycobacteroides abscessus (strain ATCC 19977 / DSM 44196 / CCUG 20993 / CIP 104536 / JCM 13569 / NCTC 13031 / TMC 1543 / L948) (Mycobacterium abscessus).